The primary structure comprises 499 residues: Bestrophin homolog 22 (499 aa).

A run of 4 helical transmembrane segments spans residues 29–49 (WKAVFGQLAVWTAVFLLISCI), 77–97 (IPLTFLLGFFVSFVVARWGSI), 235–255 (LVYPQVIFLAVRIYFMICLIG), and 267–287 (GIDLWLPITTMVQFLVYMGWM). Positions 417–432 (HNAKHAKQRGLERANS) are enriched in basic and acidic residues. 2 disordered regions span residues 417–455 (HNAKHAKQRGLERANSPDKCLSKMRSRSNGKFRTSANGS) and 474–499 (TSNPNQVHPHSIAVFPPEEQQTTSRH).

It belongs to the anion channel-forming bestrophin (TC 1.A.46) family. Calcium-sensitive chloride channel subfamily. Forms oligomers.

The protein resides in the cell membrane. Forms chloride channels. This chain is Bestrophin homolog 22 (best-22), found in Caenorhabditis elegans.